A 123-amino-acid polypeptide reads, in one-letter code: Small ribosomal subunit protein uS12cz/uS12cy (123 aa).

Belongs to the universal ribosomal protein uS12 family. As to quaternary structure, part of the 30S ribosomal subunit.

Its subcellular location is the plastid. It is found in the chloroplast. Functionally, with S4 and S5 plays an important role in translational accuracy. Located at the interface of the 30S and 50S subunits. This Gossypium hirsutum (Upland cotton) protein is Small ribosomal subunit protein uS12cz/uS12cy (rps12-A).